Reading from the N-terminus, the 339-residue chain is Biotin synthase (339 aa).

The region spanning 51–278 is the Radical SAM core domain; it reads TEVELATLLS…KARVRLSAGR (228 aa). 3 residues coordinate [4Fe-4S] cluster: C66, C70, and C73. [2Fe-2S] cluster is bound by residues C110, C141, C201, and R273.

This sequence belongs to the radical SAM superfamily. Biotin synthase family. In terms of assembly, homodimer. [4Fe-4S] cluster is required as a cofactor. It depends on [2Fe-2S] cluster as a cofactor.

The enzyme catalyses (4R,5S)-dethiobiotin + (sulfur carrier)-SH + 2 reduced [2Fe-2S]-[ferredoxin] + 2 S-adenosyl-L-methionine = (sulfur carrier)-H + biotin + 2 5'-deoxyadenosine + 2 L-methionine + 2 oxidized [2Fe-2S]-[ferredoxin]. It participates in cofactor biosynthesis; biotin biosynthesis; biotin from 7,8-diaminononanoate: step 2/2. Catalyzes the conversion of dethiobiotin (DTB) to biotin by the insertion of a sulfur atom into dethiobiotin via a radical-based mechanism. The polypeptide is Biotin synthase (Janthinobacterium sp. (strain Marseille) (Minibacterium massiliensis)).